A 407-amino-acid chain; its full sequence is MKTIVKLDLDKKPWEQDGQIHNRWHPDLPMIAMVKPGDEFRVECMDWTGGQIGNNDSANDVRDVDLTQVHYLSGPIGVEGAEPGDLMVVDILDVGTFDDSQWGFNGLFAKENGGGFLTDHFPEASKTIWDFHGVYTTSRHVPKVRYAGIMHPGLIGCLPSKELLDTWNKREGDLIATDPDRVPPLACPPTSQSAVMGRLSGDAAKKAAAEGARTVPPRDHGGNCDIKNLTKGSRVYFPVYVKDGGLSMGDLHFSQGDGEITFCGAIEMAGYLDIKVGLIKDGVKKYGIKNPVFQPSPITPTYRDYMIFEGISVDEAGKQHYLDVHIAYRQACLNAIEYLKKFGYSGEQAVSILGTAPVEGHISGIVDIPNACATLWIPTEIFEFDIRPNADGPKIMVPPGVDVSFTS.

In terms of assembly, homotrimer.

It catalyses the reaction formamide + H2O = formate + NH4(+). Its function is as follows. Hydrolyzes formamide with the production of ammonia which can be used as a source of nitrogen for growth. Also acts, more slowly, on acetamide, propanamide and butanamide. In Methylophilus methylotrophus (Bacterium W3A1), this protein is Formamidase (fmdA).